The primary structure comprises 339 residues: tRNA N6-adenosine threonylcarbamoyltransferase (339 aa).

Positions 111 and 115 each coordinate Fe cation. Residues 134–138 (VVSGG), D167, G180, and N279 each bind substrate. A Fe cation-binding site is contributed by D307.

Belongs to the KAE1 / TsaD family. Requires Fe(2+) as cofactor.

The protein localises to the cytoplasm. It catalyses the reaction L-threonylcarbamoyladenylate + adenosine(37) in tRNA = N(6)-L-threonylcarbamoyladenosine(37) in tRNA + AMP + H(+). In terms of biological role, required for the formation of a threonylcarbamoyl group on adenosine at position 37 (t(6)A37) in tRNAs that read codons beginning with adenine. Is involved in the transfer of the threonylcarbamoyl moiety of threonylcarbamoyl-AMP (TC-AMP) to the N6 group of A37, together with TsaE and TsaB. TsaD likely plays a direct catalytic role in this reaction. The sequence is that of tRNA N6-adenosine threonylcarbamoyltransferase from Syntrophobacter fumaroxidans (strain DSM 10017 / MPOB).